A 143-amino-acid polypeptide reads, in one-letter code: Nucleoside diphosphate kinase (143 aa).

Residues K11, F59, R87, T93, R104, and N114 each contribute to the ATP site. The active-site Pros-phosphohistidine intermediate is H117.

The protein belongs to the NDK family. In terms of assembly, homotetramer. It depends on Mg(2+) as a cofactor.

It localises to the cytoplasm. It catalyses the reaction a 2'-deoxyribonucleoside 5'-diphosphate + ATP = a 2'-deoxyribonucleoside 5'-triphosphate + ADP. It carries out the reaction a ribonucleoside 5'-diphosphate + ATP = a ribonucleoside 5'-triphosphate + ADP. Functionally, major role in the synthesis of nucleoside triphosphates other than ATP. The ATP gamma phosphate is transferred to the NDP beta phosphate via a ping-pong mechanism, using a phosphorylated active-site intermediate. The polypeptide is Nucleoside diphosphate kinase (Shewanella amazonensis (strain ATCC BAA-1098 / SB2B)).